Reading from the N-terminus, the 324-residue chain is Glyoxylate/hydroxypyruvate reductase B (324 aa).

Active-site residues include R237 and E266. Catalysis depends on H285, which acts as the Proton donor.

Belongs to the D-isomer specific 2-hydroxyacid dehydrogenase family. GhrB subfamily. As to quaternary structure, homodimer.

It is found in the cytoplasm. It carries out the reaction glycolate + NADP(+) = glyoxylate + NADPH + H(+). The catalysed reaction is (R)-glycerate + NAD(+) = 3-hydroxypyruvate + NADH + H(+). It catalyses the reaction (R)-glycerate + NADP(+) = 3-hydroxypyruvate + NADPH + H(+). In terms of biological role, catalyzes the NADPH-dependent reduction of glyoxylate and hydroxypyruvate into glycolate and glycerate, respectively. This is Glyoxylate/hydroxypyruvate reductase B from Shigella boydii serotype 18 (strain CDC 3083-94 / BS512).